Consider the following 142-residue polypeptide: Large ribosomal subunit protein uL13 (142 aa).

The protein belongs to the universal ribosomal protein uL13 family. In terms of assembly, part of the 50S ribosomal subunit.

Its function is as follows. This protein is one of the early assembly proteins of the 50S ribosomal subunit, although it is not seen to bind rRNA by itself. It is important during the early stages of 50S assembly. This is Large ribosomal subunit protein uL13 from Coxiella burnetii (strain CbuG_Q212) (Coxiella burnetii (strain Q212)).